A 215-amino-acid polypeptide reads, in one-letter code: Probable peptidyl-prolyl cis-trans isomerase (215 aa).

The 160-residue stretch at 38–197 folds into the PPIase cyclophilin-type domain; it reads DGIYAVMETN…RRGAAAKRFV (160 aa).

The protein belongs to the cyclophilin-type PPIase family.

It catalyses the reaction [protein]-peptidylproline (omega=180) = [protein]-peptidylproline (omega=0). In terms of biological role, PPIases accelerate the folding of proteins. It catalyzes the cis-trans isomerization of proline imidic peptide bonds in oligopeptides. The chain is Probable peptidyl-prolyl cis-trans isomerase (ppiB) from Treponema pallidum (strain Nichols).